Here is a 299-residue protein sequence, read N- to C-terminus: GTPase Era (299 aa).

The Era-type G domain maps to lysine 5–glutamate 172. The G1 stretch occupies residues glycine 13–serine 20. Glycine 13–serine 20 provides a ligand contact to GTP. The segment at glutamine 39–asparagine 43 is G2. The interval aspartate 60 to glycine 63 is G3. Residues aspartate 60–isoleucine 64 and asparagine 122–aspartate 125 contribute to the GTP site. A G4 region spans residues asparagine 122–aspartate 125. The segment at isoleucine 151–alanine 153 is G5. The KH type-2 domain occupies threonine 203–arginine 280.

It belongs to the TRAFAC class TrmE-Era-EngA-EngB-Septin-like GTPase superfamily. Era GTPase family. Monomer.

It localises to the cytoplasm. It is found in the cell membrane. An essential GTPase that binds both GDP and GTP, with rapid nucleotide exchange. Plays a role in 16S rRNA processing and 30S ribosomal subunit biogenesis and possibly also in cell cycle regulation and energy metabolism. The protein is GTPase Era of Staphylococcus epidermidis (strain ATCC 12228 / FDA PCI 1200).